The sequence spans 365 residues: NAD(P)H-quinone oxidoreductase subunit 1, chloroplastic (365 aa).

The next 6 helical transmembrane spans lie at 29-49 (IWLLVPIFTLILVIIIGVLVI), 106-126 (IAVISTLLSYLVIPFGYHLVL), 129-149 (LSIGVFLWIAISSIAPIGLLM), 250-270 (YSGIKFGLFYVASYLNLLVSS), 302-322 (IFGMTIGILITLAKAYLFLFI), and 338-358 (LLNLGWKFLLPISLGNLLLTT).

Belongs to the complex I subunit 1 family. NDH is composed of at least 16 different subunits, 5 of which are encoded in the nucleus.

The protein resides in the plastid. It localises to the chloroplast thylakoid membrane. It catalyses the reaction a plastoquinone + NADH + (n+1) H(+)(in) = a plastoquinol + NAD(+) + n H(+)(out). The enzyme catalyses a plastoquinone + NADPH + (n+1) H(+)(in) = a plastoquinol + NADP(+) + n H(+)(out). Functionally, NDH shuttles electrons from NAD(P)H:plastoquinone, via FMN and iron-sulfur (Fe-S) centers, to quinones in the photosynthetic chain and possibly in a chloroplast respiratory chain. The immediate electron acceptor for the enzyme in this species is believed to be plastoquinone. Couples the redox reaction to proton translocation, and thus conserves the redox energy in a proton gradient. In Acorus calamus (Sweet flag), this protein is NAD(P)H-quinone oxidoreductase subunit 1, chloroplastic.